A 366-amino-acid polypeptide reads, in one-letter code: Chorismate synthase (366 aa).

NADP(+) contacts are provided by R48 and R54. FMN-binding positions include 125–127 (RSS), 238–239 (NA), G278, 293–297 (KPTSS), and R319.

The protein belongs to the chorismate synthase family. In terms of assembly, homotetramer. The cofactor is FMNH2.

The enzyme catalyses 5-O-(1-carboxyvinyl)-3-phosphoshikimate = chorismate + phosphate. It functions in the pathway metabolic intermediate biosynthesis; chorismate biosynthesis; chorismate from D-erythrose 4-phosphate and phosphoenolpyruvate: step 7/7. In terms of biological role, catalyzes the anti-1,4-elimination of the C-3 phosphate and the C-6 proR hydrogen from 5-enolpyruvylshikimate-3-phosphate (EPSP) to yield chorismate, which is the branch point compound that serves as the starting substrate for the three terminal pathways of aromatic amino acid biosynthesis. This reaction introduces a second double bond into the aromatic ring system. The polypeptide is Chorismate synthase (Methylococcus capsulatus (strain ATCC 33009 / NCIMB 11132 / Bath)).